The primary structure comprises 295 residues: Undecaprenyl-diphosphatase (295 aa).

Transmembrane regions (helical) follow at residues 39–59 (PGAA…LLYF), 97–117 (WYII…QHAI), 121–141 (LRNL…LWIV), 198–218 (AFLM…VKAI), 232–252 (ATIA…IGFL), and 263–283 (FAIY…CGVL).

The protein belongs to the UppP family.

Its subcellular location is the cell membrane. The catalysed reaction is di-trans,octa-cis-undecaprenyl diphosphate + H2O = di-trans,octa-cis-undecaprenyl phosphate + phosphate + H(+). In terms of biological role, catalyzes the dephosphorylation of undecaprenyl diphosphate (UPP). Confers resistance to bacitracin. This Bifidobacterium animalis subsp. lactis (strain AD011) protein is Undecaprenyl-diphosphatase.